The following is a 336-amino-acid chain: Glyceraldehyde-3-phosphate dehydrogenase (336 aa).

NAD(+)-binding positions include 12–13 (RI), aspartate 34, arginine 78, and threonine 121. D-glyceraldehyde 3-phosphate is bound by residues 151 to 153 (SCT), threonine 182, arginine 199, 212 to 213 (TG), and arginine 235. Cysteine 152 functions as the Nucleophile in the catalytic mechanism. Residue asparagine 316 participates in NAD(+) binding.

Belongs to the glyceraldehyde-3-phosphate dehydrogenase family. As to quaternary structure, homotetramer.

It localises to the cytoplasm. It carries out the reaction D-glyceraldehyde 3-phosphate + phosphate + NAD(+) = (2R)-3-phospho-glyceroyl phosphate + NADH + H(+). It functions in the pathway carbohydrate degradation; glycolysis; pyruvate from D-glyceraldehyde 3-phosphate: step 1/5. Functionally, also binds human plasminogen. Catalyzes the oxidative phosphorylation of glyceraldehyde 3-phosphate (G3P) to 1,3-bisphosphoglycerate (BPG) using the cofactor NAD. The first reaction step involves the formation of a hemiacetal intermediate between G3P and a cysteine residue, and this hemiacetal intermediate is then oxidized to a thioester, with concomitant reduction of NAD to NADH. The reduced NADH is then exchanged with the second NAD, and the thioester is attacked by a nucleophilic inorganic phosphate to produce BPG. The protein is Glyceraldehyde-3-phosphate dehydrogenase (gap) of Streptococcus pyogenes.